The sequence spans 104 residues: uncharacterized protein (104 aa).

A coiled-coil region spans residues 24–69; sequence VIKQIIEKYNDKVKELDTLKNQYQNLQQDYENLKQQVSLQRQTMIS.

This is an uncharacterized protein from Acanthamoeba polyphaga mimivirus (APMV).